The sequence spans 196 residues: FMN-dependent NADH:quinone oxidoreductase (196 aa).

FMN is bound at residue Ser10.

Belongs to the azoreductase type 1 family. In terms of assembly, homodimer. Requires FMN as cofactor.

It catalyses the reaction 2 a quinone + NADH + H(+) = 2 a 1,4-benzosemiquinone + NAD(+). The enzyme catalyses N,N-dimethyl-1,4-phenylenediamine + anthranilate + 2 NAD(+) = 2-(4-dimethylaminophenyl)diazenylbenzoate + 2 NADH + 2 H(+). Functionally, quinone reductase that provides resistance to thiol-specific stress caused by electrophilic quinones. Its function is as follows. Also exhibits azoreductase activity. Catalyzes the reductive cleavage of the azo bond in aromatic azo compounds to the corresponding amines. This chain is FMN-dependent NADH:quinone oxidoreductase, found in Cereibacter sphaeroides (strain ATCC 17023 / DSM 158 / JCM 6121 / CCUG 31486 / LMG 2827 / NBRC 12203 / NCIMB 8253 / ATH 2.4.1.) (Rhodobacter sphaeroides).